Reading from the N-terminus, the 231-residue chain is SrfA-induced gene F protein (231 aa).

This is SrfA-induced gene F protein (sigF) from Dictyostelium discoideum (Social amoeba).